A 354-amino-acid chain; its full sequence is Probable L-ascorbate-6-phosphate lactonase UlaG (354 aa).

This sequence belongs to the UlaG family. Requires a divalent metal cation as cofactor.

The protein resides in the cytoplasm. It catalyses the reaction L-ascorbate 6-phosphate + H2O = 3-dehydro-L-gulonate 6-phosphate. The protein operates within cofactor degradation; L-ascorbate degradation; D-xylulose 5-phosphate from L-ascorbate: step 1/4. Functionally, probably catalyzes the hydrolysis of L-ascorbate-6-P into 3-keto-L-gulonate-6-P. Is essential for L-ascorbate utilization under anaerobic conditions. In Salmonella choleraesuis (strain SC-B67), this protein is Probable L-ascorbate-6-phosphate lactonase UlaG.